The primary structure comprises 558 residues: Dihydroxy-acid dehydratase (558 aa).

A [2Fe-2S] cluster-binding site is contributed by cysteine 54. Residue aspartate 86 coordinates Mg(2+). [2Fe-2S] cluster is bound at residue cysteine 127. 2 residues coordinate Mg(2+): aspartate 128 and lysine 129. The residue at position 129 (lysine 129) is an N6-carboxylysine. [2Fe-2S] cluster is bound at residue cysteine 199. Glutamate 448 contributes to the Mg(2+) binding site. The active-site Proton acceptor is serine 474.

It belongs to the IlvD/Edd family. In terms of assembly, homodimer. It depends on [2Fe-2S] cluster as a cofactor. Requires Mg(2+) as cofactor.

It carries out the reaction (2R)-2,3-dihydroxy-3-methylbutanoate = 3-methyl-2-oxobutanoate + H2O. The catalysed reaction is (2R,3R)-2,3-dihydroxy-3-methylpentanoate = (S)-3-methyl-2-oxopentanoate + H2O. It functions in the pathway amino-acid biosynthesis; L-isoleucine biosynthesis; L-isoleucine from 2-oxobutanoate: step 3/4. Its pathway is amino-acid biosynthesis; L-valine biosynthesis; L-valine from pyruvate: step 3/4. In terms of biological role, functions in the biosynthesis of branched-chain amino acids. Catalyzes the dehydration of (2R,3R)-2,3-dihydroxy-3-methylpentanoate (2,3-dihydroxy-3-methylvalerate) into 2-oxo-3-methylpentanoate (2-oxo-3-methylvalerate) and of (2R)-2,3-dihydroxy-3-methylbutanoate (2,3-dihydroxyisovalerate) into 2-oxo-3-methylbutanoate (2-oxoisovalerate), the penultimate precursor to L-isoleucine and L-valine, respectively. This chain is Dihydroxy-acid dehydratase, found in Acidothermus cellulolyticus (strain ATCC 43068 / DSM 8971 / 11B).